Here is a 370-residue protein sequence, read N- to C-terminus: Aminomethyltransferase (370 aa).

It belongs to the GcvT family. The glycine cleavage system is composed of four proteins: P, T, L and H.

It carries out the reaction N(6)-[(R)-S(8)-aminomethyldihydrolipoyl]-L-lysyl-[protein] + (6S)-5,6,7,8-tetrahydrofolate = N(6)-[(R)-dihydrolipoyl]-L-lysyl-[protein] + (6R)-5,10-methylene-5,6,7,8-tetrahydrofolate + NH4(+). Its function is as follows. The glycine cleavage system catalyzes the degradation of glycine. The chain is Aminomethyltransferase from Clostridium botulinum (strain Okra / Type B1).